The following is an 89-amino-acid chain: Cell division topological specificity factor (89 aa).

This sequence belongs to the MinE family.

Prevents the cell division inhibition by proteins MinC and MinD at internal division sites while permitting inhibition at polar sites. This ensures cell division at the proper site by restricting the formation of a division septum at the midpoint of the long axis of the cell. The sequence is that of Cell division topological specificity factor from Yersinia pestis bv. Antiqua (strain Angola).